Reading from the N-terminus, the 233-residue chain is Large ribosomal subunit protein uL1 (233 aa).

Belongs to the universal ribosomal protein uL1 family. As to quaternary structure, part of the 50S ribosomal subunit.

Its function is as follows. Binds directly to 23S rRNA. The L1 stalk is quite mobile in the ribosome, and is involved in E site tRNA release. Functionally, protein L1 is also a translational repressor protein, it controls the translation of the L11 operon by binding to its mRNA. This chain is Large ribosomal subunit protein uL1, found in Thermotoga sp. (strain RQ2).